A 1001-amino-acid chain; its full sequence is Non-canonical poly(A) RNA polymerase protein Trf4-1 (1001 aa).

Composition is skewed to low complexity over residues 44-86 and 127-163; these read TING…NNSS and RNST…STNG. Disordered regions lie at residues 44–92 and 115–238; these read TING…PYLS and QQQQ…AGGA. A compositionally biased stretch (gly residues) spans 164-178; sequence PGAGTGTSTGAGGTG. A compositionally biased stretch (low complexity) spans 179–216; that stretch reads TNSPATTASSTAATTTGPATSMSDTSNNPPQSTTTPAS. Mn(2+)-binding residues include D328 and D330. Residues 458–517 form the PAP-associated domain; that stretch reads NLGVLLLEFFELYGRRFNYMKIGISIKNGGRYMPKDELQRDMVDGHRPSLLCIEDPLTPG. Disordered regions lie at residues 631-652, 687-740, 767-963, and 977-1001; these read PTAH…PGAH, QQQQ…AQEV, ASNS…LRGT, and SSES…RDER. Positions 635 to 649 are enriched in basic residues; sequence GHSHAHSHSHGHAHP. Composition is skewed to low complexity over residues 687-708 and 768-788; these read QQQQ…NQSQ and SNSW…TGSS. Gly residues predominate over residues 827–841; the sequence is VGTGSNRGGGDGSGG. Over residues 844–854 the composition is skewed to polar residues; that stretch reads YNQRNNHNSSG. Over residues 855-880 the composition is skewed to low complexity; sequence YYHQQYYVPPPMQQQLSKSNSSSNYH. Residues 881 to 912 are compositionally biased toward basic residues; that stretch reads QQHHHSHSHGNHSHRQQHHHQQQHHHQQRPQH. Low complexity-rich tracts occupy residues 932 to 955 and 977 to 992; these read SAGN…SNNS and SSES…SSRS.

Belongs to the DNA polymerase type-B-like family. Mn(2+) is required as a cofactor.

The protein localises to the cytoplasm. It carries out the reaction RNA(n) + ATP = RNA(n)-3'-adenine ribonucleotide + diphosphate. Functionally, involved in a post-transcriptional quality control mechanism limiting inappropriate expression of genetic information. Polyadenylation is required for the degradative activity of the exosome on several of its nuclear RNA substrates. Polyadenylates RNA processing and degradation intermediates of snRNAs and mRNAs. The protein is Non-canonical poly(A) RNA polymerase protein Trf4-1 of Drosophila melanogaster (Fruit fly).